Reading from the N-terminus, the 30-residue chain is Glucagon-like peptide (30 aa).

Arginine amide is present on arginine 30.

This sequence belongs to the glucagon family.

It localises to the secreted. The chain is Glucagon-like peptide from Anguilla anguilla (European freshwater eel).